A 67-amino-acid polypeptide reads, in one-letter code: Large ribosomal subunit protein bL32 (67 aa).

The span at 1 to 19 (MAVPKRKMSRSNTRARRSQ) shows a compositional bias: basic residues. The disordered stretch occupies residues 1-21 (MAVPKRKMSRSNTRARRSQWK).

This sequence belongs to the bacterial ribosomal protein bL32 family.

The chain is Large ribosomal subunit protein bL32 from Clavibacter sepedonicus (Clavibacter michiganensis subsp. sepedonicus).